Reading from the N-terminus, the 126-residue chain is MQLNMLKGKLHQARVTQTELEYEGSCAIDLDLLEAVGIHEYEQIHVYNIENGERFVTYAIIGERGSRMISMNGAAAHKCNEGDRVIICAYAGVPESELGEFQPRLAYLDADNRITQRRGSIPLQVA.

Ser-25 functions as the Schiff-base intermediate with substrate; via pyruvic acid in the catalytic mechanism. Ser-25 is subject to Pyruvic acid (Ser). Thr-57 lines the substrate pocket. Tyr-58 acts as the Proton donor in catalysis. 73–75 is a binding site for substrate; that stretch reads GAA.

It belongs to the PanD family. In terms of assembly, heterooctamer of four alpha and four beta subunits. Pyruvate is required as a cofactor. Is synthesized initially as an inactive proenzyme, which is activated by self-cleavage at a specific serine bond to produce a beta-subunit with a hydroxyl group at its C-terminus and an alpha-subunit with a pyruvoyl group at its N-terminus.

It is found in the cytoplasm. The catalysed reaction is L-aspartate + H(+) = beta-alanine + CO2. It participates in cofactor biosynthesis; (R)-pantothenate biosynthesis; beta-alanine from L-aspartate: step 1/1. In terms of biological role, catalyzes the pyruvoyl-dependent decarboxylation of aspartate to produce beta-alanine. This Halorhodospira halophila (strain DSM 244 / SL1) (Ectothiorhodospira halophila (strain DSM 244 / SL1)) protein is Aspartate 1-decarboxylase.